Consider the following 258-residue polypeptide: 5'-nucleotidase SurE (258 aa).

4 residues coordinate a divalent metal cation: Asp-16, Asp-17, Ser-47, and Asn-99.

The protein belongs to the SurE nucleotidase family. A divalent metal cation serves as cofactor.

It is found in the cytoplasm. It carries out the reaction a ribonucleoside 5'-phosphate + H2O = a ribonucleoside + phosphate. Functionally, nucleotidase that shows phosphatase activity on nucleoside 5'-monophosphates. The sequence is that of 5'-nucleotidase SurE from Coxiella burnetii (strain Dugway 5J108-111).